Reading from the N-terminus, the 194-residue chain is Myelin-associated neurite-outgrowth inhibitor (194 aa).

Methionine 1 carries the post-translational modification N-acetylmethionine. The Cytoplasmic portion of the chain corresponds to 1 to 18 (MNPVYSPGSSGVPYANAK). Serine 6 is subject to Phosphoserine. A helical membrane pass occupies residues 19–41 (GIGYPAGFPVGYAAAPAYSPNMY). At 42-141 (PGANPTFQTG…PAPIPPPRGS (100 aa)) the chain is on the extracellular side. Residue asparagine 45 is glycosylated (N-linked (GlcNAc...) asparagine). The helical transmembrane segment at 142–163 (GVTMGMVAGTTMAMSAGTLLTA) threads the bilayer. Over 164 to 194 (HSPTPVAPHPVTVPTYRAPGTPTYSYVPPQW) the chain is Cytoplasmic.

The protein belongs to the FAM168 family. As to quaternary structure, may form homodimers. May interact with DAZAP2, FAM168A, PRDX6, RBM6, TMTC1 and YPEL2. Interacts with CDC27. Post-translationally, N-glycosylated. As to expression, predominantly expressed in the brain, including olfactory bulb, cortex and cerebellum (at protein level).

It localises to the cytoplasm. The protein localises to the perinuclear region. Its subcellular location is the cell membrane. It is found in the cell projection. The protein resides in the axon. Functionally, inhibitor of neuronal axonal outgrowth. Acts as a negative regulator of CDC42 and STAT3 and a positive regulator of STMN2. Positive regulator of CDC27. This is Myelin-associated neurite-outgrowth inhibitor (Fam168b) from Mus musculus (Mouse).